The sequence spans 484 residues: Nuclear rim protein 1 (484 aa).

Position 3 is a phosphoserine (Ser3). The next 2 helical transmembrane spans lie at 145 to 165 (FTIF…MFGY) and 252 to 272 (TAIV…AIVF). Residues 416-457 (SSNENLEKGGAFLPNQDQNRPSKSLSPLRKTPLSARQKRFEG) form a disordered region. Position 417 is a phosphoserine (Ser417). The segment covering 430–440 (NQDQNRPSKSL) has biased composition (polar residues). Residue Ser474 is modified to Phosphoserine.

The protein belongs to the NUR1 family. Interacts with CSM1.

Its subcellular location is the nucleus membrane. In terms of biological role, member of a perinuclear network that controls recombination at multiple loci to maintain genome stability. Required for rDNA repeat stability. This Saccharomyces cerevisiae (strain Lalvin EC1118 / Prise de mousse) (Baker's yeast) protein is Nuclear rim protein 1 (NUR1).